Reading from the N-terminus, the 467-residue chain is Asparagine--tRNA ligase (467 aa).

Belongs to the class-II aminoacyl-tRNA synthetase family. Homodimer.

The protein resides in the cytoplasm. It carries out the reaction tRNA(Asn) + L-asparagine + ATP = L-asparaginyl-tRNA(Asn) + AMP + diphosphate + H(+). This is Asparagine--tRNA ligase from Phocaeicola vulgatus (strain ATCC 8482 / DSM 1447 / JCM 5826 / CCUG 4940 / NBRC 14291 / NCTC 11154) (Bacteroides vulgatus).